The following is a 561-amino-acid chain: Delta(24)-sterol reductase (561 aa).

Topologically, residues 1–25 are lumenal; the sequence is MSDLQTPLVRPKRKKTWVDYFVKFR. Ser2 is modified (phosphoserine). Residues 26 to 46 form a helical; Signal-anchor membrane-spanning segment; that stretch reads WIIVIFIVLPFSATFYFLIYL. Topologically, residues 47–561 are cytoplasmic; that stretch reads GDMWSESKSF…HLETAYAEAD (515 aa). Residues 49-232 enclose the FAD-binding PCMH-type domain; it reads MWSESKSFEK…VAAEIRLIKV (184 aa). Residues 518–539 form an interaction with calmodulin region; it reads CRKKYRAIGTFMSVYYKSKKGR.

The protein belongs to the DIMINUTO family. As to quaternary structure, interacts with calmodulin.

The protein localises to the microsome membrane. The catalysed reaction is lathosterol + NADP(+) = 5alpha-cholesta-7,24-dien-3beta-ol + NADPH + H(+). Its function is as follows. Plays a critical role in the general process of plant cell elongation. Involved in the synthesis of campesterol, an early precursor of brassinolide. Required for the conversion of 24-methylenecholesterol to campesterol and for the conversion of isofucosterol to sitosterol. Necessary for both the isomerization and reduction of 24-methylenecholesterol. Regulates indirectly phytochrome-mediated light responses through the modulation of brassinosteroid biosynthesis. This is Delta(24)-sterol reductase (DIM) from Arabidopsis thaliana (Mouse-ear cress).